A 324-amino-acid chain; its full sequence is Antihemorrhagic factor cHLP-A (324 aa).

The N-terminal stretch at 1–19 (MNSLVALVLLGQIIGSTLS) is a signal peptide. Cystatin fetuin-A-type domains follow at residues 21–130 (QLGP…VKCK) and 141–254 (RNCP…SDCV). 6 cysteine pairs are disulfide-bonded: cysteine 28–cysteine 315, cysteine 85–cysteine 96, cysteine 110–cysteine 129, cysteine 143–cysteine 146, cysteine 205–cysteine 217, and cysteine 230–cysteine 253. N-linked (GlcNAc...) asparagine glycosylation is present at asparagine 204. N-linked (GlcNAc...) asparagine glycosylation is present at asparagine 282.

It belongs to the fetuin family. As to quaternary structure, homodimer. Expressed by the liver.

It is found in the secreted. Functionally, potent inhibitor of hemorrhagic activity but also proteolytic activities. Inhibition occurs by formation of a non-covalent complex between this protein and the proteinases at their metalloproteinase domains. This is Antihemorrhagic factor cHLP-A from Gloydius brevicauda (Korean slamosa snake).